The primary structure comprises 174 residues: UPF0340 protein SH0921 (174 aa).

Belongs to the UPF0340 family.

This is UPF0340 protein SH0921 from Staphylococcus haemolyticus (strain JCSC1435).